The chain runs to 195 residues: Imidazoleglycerol-phosphate dehydratase (195 aa).

It belongs to the imidazoleglycerol-phosphate dehydratase family.

The protein resides in the cytoplasm. The enzyme catalyses D-erythro-1-(imidazol-4-yl)glycerol 3-phosphate = 3-(imidazol-4-yl)-2-oxopropyl phosphate + H2O. It participates in amino-acid biosynthesis; L-histidine biosynthesis; L-histidine from 5-phospho-alpha-D-ribose 1-diphosphate: step 6/9. The protein is Imidazoleglycerol-phosphate dehydratase of Azoarcus sp. (strain BH72).